Consider the following 405-residue polypeptide: Argininosuccinate synthase (405 aa).

Residues 13 to 21 and A40 contribute to the ATP site; that span reads AYSGGLDTS. Residues Y91 and S96 each contribute to the L-citrulline site. An ATP-binding site is contributed by G121. Residues T123, N127, and D128 each coordinate L-aspartate. N127 lines the L-citrulline pocket. L-citrulline-binding residues include R131, S182, S191, E267, and Y279.

Belongs to the argininosuccinate synthase family. Type 1 subfamily. Homotetramer.

It is found in the cytoplasm. It catalyses the reaction L-citrulline + L-aspartate + ATP = 2-(N(omega)-L-arginino)succinate + AMP + diphosphate + H(+). The protein operates within amino-acid biosynthesis; L-arginine biosynthesis; L-arginine from L-ornithine and carbamoyl phosphate: step 2/3. This chain is Argininosuccinate synthase, found in Rhizobium meliloti (strain 1021) (Ensifer meliloti).